Consider the following 141-residue polypeptide: Small ribosomal subunit protein uS8c (141 aa).

The protein belongs to the universal ribosomal protein uS8 family. Part of the 30S ribosomal subunit.

The protein resides in the plastid. It localises to the chloroplast. One of the primary rRNA binding proteins, it binds directly to 16S rRNA central domain where it helps coordinate assembly of the platform of the 30S subunit. This chain is Small ribosomal subunit protein uS8c (rps8), found in Chlamydomonas reinhardtii (Chlamydomonas smithii).